The sequence spans 215 residues: 3-demethoxyubiquinol 3-hydroxylase (215 aa).

Residues Glu64, Glu94, His97, Glu146, Glu178, and His181 each contribute to the Fe cation site.

It belongs to the COQ7 family. Fe cation is required as a cofactor.

Its subcellular location is the cell membrane. The enzyme catalyses a 5-methoxy-2-methyl-3-(all-trans-polyprenyl)benzene-1,4-diol + AH2 + O2 = a 3-demethylubiquinol + A + H2O. It participates in cofactor biosynthesis; ubiquinone biosynthesis. In terms of biological role, catalyzes the hydroxylation of 2-nonaprenyl-3-methyl-6-methoxy-1,4-benzoquinol during ubiquinone biosynthesis. This chain is 3-demethoxyubiquinol 3-hydroxylase, found in Pseudomonas paraeruginosa (strain DSM 24068 / PA7) (Pseudomonas aeruginosa (strain PA7)).